A 179-amino-acid polypeptide reads, in one-letter code: ATP-dependent protease subunit HslV (179 aa).

Residue Thr-7 is part of the active site. Gly-162, Cys-165, and Thr-168 together coordinate Na(+).

The protein belongs to the peptidase T1B family. HslV subfamily. A double ring-shaped homohexamer of HslV is capped on each side by a ring-shaped HslU homohexamer. The assembly of the HslU/HslV complex is dependent on binding of ATP.

Its subcellular location is the cytoplasm. The catalysed reaction is ATP-dependent cleavage of peptide bonds with broad specificity.. Its activity is regulated as follows. Allosterically activated by HslU binding. In terms of biological role, protease subunit of a proteasome-like degradation complex believed to be a general protein degrading machinery. In Bordetella pertussis (strain Tohama I / ATCC BAA-589 / NCTC 13251), this protein is ATP-dependent protease subunit HslV.